The sequence spans 402 residues: Acetate kinase (402 aa).

N7 provides a ligand contact to Mg(2+). Residue K14 coordinates ATP. Substrate is bound at residue R95. Catalysis depends on D152, which acts as the Proton donor/acceptor. ATP contacts are provided by residues 212–216 (HLGNG), 286–288 (DMR), and 334–338 (GIGEN). E388 is a Mg(2+) binding site.

This sequence belongs to the acetokinase family. Homodimer. Requires Mg(2+) as cofactor. Mn(2+) is required as a cofactor.

The protein localises to the cytoplasm. The enzyme catalyses acetate + ATP = acetyl phosphate + ADP. It participates in metabolic intermediate biosynthesis; acetyl-CoA biosynthesis; acetyl-CoA from acetate: step 1/2. Functionally, catalyzes the formation of acetyl phosphate from acetate and ATP. Can also catalyze the reverse reaction. This chain is Acetate kinase, found in Nitratidesulfovibrio vulgaris (strain DP4) (Desulfovibrio vulgaris).